Here is a 346-residue protein sequence, read N- to C-terminus: Biotin synthase (346 aa).

In terms of domain architecture, Radical SAM core spans 40 to 264 (NEVQVSTLLS…MMPHSHVRLS (225 aa)). The [4Fe-4S] cluster site is built by Cys-55, Cys-59, and Cys-62. Cys-99, Cys-130, Cys-190, and Arg-262 together coordinate [2Fe-2S] cluster.

It belongs to the radical SAM superfamily. Biotin synthase family. Homodimer. [4Fe-4S] cluster is required as a cofactor. [2Fe-2S] cluster serves as cofactor.

The enzyme catalyses (4R,5S)-dethiobiotin + (sulfur carrier)-SH + 2 reduced [2Fe-2S]-[ferredoxin] + 2 S-adenosyl-L-methionine = (sulfur carrier)-H + biotin + 2 5'-deoxyadenosine + 2 L-methionine + 2 oxidized [2Fe-2S]-[ferredoxin]. It participates in cofactor biosynthesis; biotin biosynthesis; biotin from 7,8-diaminononanoate: step 2/2. Its function is as follows. Catalyzes the conversion of dethiobiotin (DTB) to biotin by the insertion of a sulfur atom into dethiobiotin via a radical-based mechanism. The chain is Biotin synthase from Colwellia psychrerythraea (strain 34H / ATCC BAA-681) (Vibrio psychroerythus).